The primary structure comprises 72 residues: Translation initiation factor IF-1 (72 aa).

The 72-residue stretch at 1-72 folds into the S1-like domain; the sequence is MAKEKDTIRT…PTRGRIVYRK (72 aa).

It belongs to the IF-1 family. Component of the 30S ribosomal translation pre-initiation complex which assembles on the 30S ribosome in the order IF-2 and IF-3, IF-1 and N-formylmethionyl-tRNA(fMet); mRNA recruitment can occur at any time during PIC assembly.

The protein resides in the cytoplasm. One of the essential components for the initiation of protein synthesis. Stabilizes the binding of IF-2 and IF-3 on the 30S subunit to which N-formylmethionyl-tRNA(fMet) subsequently binds. Helps modulate mRNA selection, yielding the 30S pre-initiation complex (PIC). Upon addition of the 50S ribosomal subunit IF-1, IF-2 and IF-3 are released leaving the mature 70S translation initiation complex. This Thermus thermophilus (strain ATCC BAA-163 / DSM 7039 / HB27) protein is Translation initiation factor IF-1.